Reading from the N-terminus, the 1313-residue chain is Envelopment polyprotein (1313 aa).

An N-terminal signal peptide occupies residues 1-17 (MIFTILNVLTRAMLVMS). The Lumenal segment spans residues 18–712 (MYSLTTWDST…HSTLSAILTS (695 aa)). N-linked (GlcNAc...) asparagine; by host glycans are attached at residues Asn76 and Asn102. Residues 178-237 (MQVLMSEIEQLKNQLSKKRNERGQEKRDAEKVMSDLMARNSDLRKHNDILTAEISQMKNK) adopt a coiled-coil conformation. The internal signal sequence for glycoprotein N stretch occupies residues 250–270 (TVVPAILSVALLSSSVAPIIA). 12 disulfides stabilise this stretch: Cys303–Cys312, Cys352–Cys362, Cys373–Cys404, Cys394–Cys407, Cys432–Cys579, Cys450–Cys460, Cys501–Cys557, Cys525–Cys536, Cys543–Cys548, Cys602–Cys605, Cys609–Cys679, and Cys629–Cys634. Residue Asn496 is glycosylated (N-linked (GlcNAc...) asparagine; by host). The chain crosses the membrane as a helical span at residues 713–733 (FLLILFIYTVFSVTTNILYVL). Residues 731–773 (YVLRLIPKQLKSPVGWLKLFINWLLTALRIKTRNVMRRINQRI) are golgi retention signal. The Cytoplasmic segment spans residues 734–791 (RLIPKQLKSPVGWLKLFINWLLTALRIKTRNVMRRINQRIGWVDHHDVERPRHREPMR). Positions 769 to 773 (INQRI) are important for correct targeting of the glycoproteins to the Golgi complex but not for heterodimerization. The segment at 793–809 (FKTTLLLTLIMMTGGNA) is internal signal sequence for glycoprotein C. 12 disulfide bridges follow: Cys810-Cys850, Cys823-Cys832, Cys875-Cys971, Cys890-Cys1084, Cys896-Cys944, Cys902-Cys951, Cys907-Cys933, Cys937-Cys942, Cys1053-Cys1066, Cys1148-Cys1220, Cys1158-Cys1161, and Cys1168-Cys1202. The Lumenal segment spans residues 810 to 1278 (CSNTVVANSK…LDWLGGPMKA (469 aa)). The segment at 896–902 (CHLVGDC) is fusion loop. The fusion loop stretch occupies residues 938-949 (GAIGCGCFNINP). A glycan (N-linked (GlcNAc...) asparagine; by host) is linked at Asn1154. N-linked (GlcNAc...) asparagine; by host glycosylation occurs at Asn1243. A helical transmembrane segment spans residues 1279 to 1299 (ILKILGFIAIGIVCFVLFMIL). At 1300–1313 (IRIAVNSINIKKKN) the chain is on the cytoplasmic side.

Belongs to the phlebovirus envelope glycoprotein family. As to quaternary structure, heterodimer with glycoprotein C. Interacts with nucleocapsid protein N and with the polymerase L in order to package them into virus particles. In terms of assembly, heterodimer with glycoprotein C. Homotrimer (postfusion). Interacts with nucleocapsid protein N and with the polymerase L in order to package them into virus particles. Interacts with host E3 ubiquitin-protein ligase UBR4; this interaction is important for viral RNA production. In terms of processing, specific enzymatic cleavages in vivo yield mature proteins including NSm protein, Glycoprotein C, and Glycoprotein N. Post-translationally, glycosylated. The glycans can attach to host CD209/DC-SIGN, and may play a role in virus entry into dendritic cells. Palmitoylated.

The protein localises to the virion membrane. Its subcellular location is the host Golgi apparatus membrane. It localises to the host endoplasmic reticulum membrane. Functionally, structural component of the virion that interacts with glycoprotein C. It shields the hydrophobic fusion loops of the glycoprotein C, preventing premature fusion. The glycoprotein protrusions are arranged on an icosahedral lattice, with T=12 triangulation. They are able to attach the virion to the host cell receptor CD209/DC-SIGN and to promote fusion of membranes with the late endosome after endocytosis of the virion. Plays a role in the packaging of ribonucleoproteins and polymerase during virus assembly. In terms of biological role, structural component of the virion that interacts with glycoprotein N. Acts as a class II fusion protein that is activated upon acidification and subsequent repositioning of the glycoprotein N. The glycoprotein protrusions are arranged on an icosahedral lattice, with T=12 triangulation. They are able to attach the virion to the host cell receptor CD209/DC-SIGN and to promote fusion of membranes with the late endosome after endocytosis of the virion. Its function is as follows. Plays a role for virus dissemination in mosquitoes. This chain is Envelopment polyprotein (GP), found in Homo sapiens (Human).